The sequence spans 437 residues: Serine carboxypeptidase-like 10 (437 aa).

The first 21 residues, 1–21, serve as a signal peptide directing secretion; that stretch reads MGSTLKHLLLLLLVLIRHVDS. Cystine bridges form between Cys80–Cys327, Cys243–Cys257, and Cys281–Cys293. A glycan (N-linked (GlcNAc...) asparagine) is linked at Asn101. The active site involves Ser175. N-linked (GlcNAc...) asparagine glycosylation occurs at Asn328. Asp362 is a catalytic residue. The N-linked (GlcNAc...) asparagine glycan is linked to Asn378. His415 is a catalytic residue. N-linked (GlcNAc...) asparagine glycosylation occurs at Asn422.

Belongs to the peptidase S10 family. In terms of tissue distribution, expressed in senescent leaves.

The protein localises to the secreted. In terms of biological role, involved in the biosynthesis of sinapoylated anthocyanins. The polypeptide is Serine carboxypeptidase-like 10 (SCPL10) (Arabidopsis thaliana (Mouse-ear cress)).